A 215-amino-acid polypeptide reads, in one-letter code: FGFR1 oncogene partner 2 homolog (215 aa).

Coiled coils occupy residues isoleucine 5–tyrosine 104 and lysine 161–glutamate 185. The disordered stretch occupies residues aspartate 194–asparagine 215. The segment covering glutamate 197 to asparagine 215 has biased composition (polar residues).

This sequence belongs to the SIKE family.

It is found in the cytoplasm. In terms of biological role, may be involved in wound healing pathway. In Pongo abelii (Sumatran orangutan), this protein is FGFR1 oncogene partner 2 homolog (FGFR1OP2).